Consider the following 885-residue polypeptide: Translation initiation factor IF-2 (885 aa).

The segment covering 123–232 (ETEAKAKAEA…EAERYSDHHI (110 aa)) has biased composition (basic and acidic residues). The disordered stretch occupies residues 123-289 (ETEAKAKAEA…RNRSTAPESM (167 aa)). The span at 253-266 (GRRARNKNTAKTKR) shows a compositional bias: basic residues. A compositionally biased stretch (basic and acidic residues) spans 267 to 276 (GGKDARDGRE). One can recognise a tr-type G domain in the interval 385 to 554 (PRAPVVTIMG…LLQAEVLELK (170 aa)). A G1 region spans residues 394-401 (GHVDHGKT). A GTP-binding site is contributed by 394–401 (GHVDHGKT). Positions 419–423 (GITQH) are G2. The tract at residues 440–443 (DTPG) is G3. Residues 440–444 (DTPGH) and 494–497 (NKMD) each bind GTP. Positions 494–497 (NKMD) are G4. A G5 region spans residues 530-532 (SAK).

It belongs to the TRAFAC class translation factor GTPase superfamily. Classic translation factor GTPase family. IF-2 subfamily.

It localises to the cytoplasm. One of the essential components for the initiation of protein synthesis. Protects formylmethionyl-tRNA from spontaneous hydrolysis and promotes its binding to the 30S ribosomal subunits. Also involved in the hydrolysis of GTP during the formation of the 70S ribosomal complex. In Shewanella oneidensis (strain ATCC 700550 / JCM 31522 / CIP 106686 / LMG 19005 / NCIMB 14063 / MR-1), this protein is Translation initiation factor IF-2.